Consider the following 386-residue polypeptide: uncharacterized protein (386 aa).

The next 2 helical transmembrane spans lie at 54–74 and 347–367; these read AVLQMIDPPALVGCIAQAIVA and LLGGIPLAGFFAAGEIGPIAG.

To M.tuberculosis Rv0628c.

Its subcellular location is the cell membrane. This is an uncharacterized protein from Mycobacterium tuberculosis (strain CDC 1551 / Oshkosh).